Here is a 475-residue protein sequence, read N- to C-terminus: MAAGALRGLPVAGGGESSESEDDCWEIGYLDRTSQKLKGLLPIEEKKEKFKKAMTIGDVSLIQELLDSGISVDSTFQYGWTPLMYAASVANAELVRVLLDSGANASFEKDKQTILITACSARGSEEQILKCVELLLSRNADPNVACRRLMTPIMYAARDGHTQVVALLVAHGAEVNTQDENGYTALTWAARQGHKNIVLKLLELGANKMLQTKDGKMPSEIAKRNKHHEIFNLLSFTLNPLEGKLQQLTKEDTICKILTTDSDREKDHIFSSYTAFGDLEVFLHGIGLEHLTDLLKERDITLRHLLTMREDEFTKNGITSEDQQKILATLKELQVEEIQFGELSEEIKLEISGDEFLNFLLKLNKQCGHLITAVQNIITELPVNSQKITLEWASPRNFTSVCEELVNNVEDLSEEVCKLKDVIQKLQNERENDPTHIQLREEVSTWNSRILKRTAITVCGFGFLLFICKLTFQRK.

Residues 1-22 (MAAGALRGLPVAGGGESSESED) are disordered. Residues Ser-17, Ser-18, and Ser-20 each carry the phosphoserine modification. ANK repeat units follow at residues 45 to 74 (EKKE…SVDS), 78 to 107 (YGWT…NASF), 110 to 144 (DKQT…DPNV), 148 to 177 (RLMT…EVNT), 181 to 210 (NGYT…NKML), and 214 to 243 (DGKM…PLEG). Residues 272-334 (SYTAFGDLEV…KILATLKELQ (63 aa)) enclose the SAM domain.

As to quaternary structure, interacts with DDX4, PIWIL1, RANBP9 and TDRD1.

It is found in the cytoplasm. Plays a central role during spermatogenesis by repressing transposable elements and preventing their mobilization, which is essential for the germline integrity. Acts via the piRNA metabolic process, which mediates the repression of transposable elements during meiosis by forming complexes composed of piRNAs and Piwi proteins and governs the methylation and subsequent repression of transposons. Its association with pi-bodies suggests a participation in the primary piRNAs metabolic process. Required prior to the pachytene stage to facilitate the production of multiple types of piRNAs, including those associated with repeats involved in the regulation of retrotransposons. May act by mediating protein-protein interactions during germ cell maturation. This is Ankyrin repeat, SAM and basic leucine zipper domain-containing protein 1 (ASZ1) from Colobus guereza (Mantled guereza).